The following is a 289-amino-acid chain: ATP synthase gamma chain (289 aa).

Belongs to the ATPase gamma chain family. In terms of assembly, F-type ATPases have 2 components, CF(1) - the catalytic core - and CF(0) - the membrane proton channel. CF(1) has five subunits: alpha(3), beta(3), gamma(1), delta(1), epsilon(1). CF(0) has three main subunits: a, b and c.

It localises to the cell inner membrane. Functionally, produces ATP from ADP in the presence of a proton gradient across the membrane. The gamma chain is believed to be important in regulating ATPase activity and the flow of protons through the CF(0) complex. The sequence is that of ATP synthase gamma chain from Haemophilus influenzae (strain PittGG).